A 209-amino-acid polypeptide reads, in one-letter code: Ribosomal RNA large subunit methyltransferase E (209 aa).

5 residues coordinate S-adenosyl-L-methionine: glycine 63, tryptophan 65, aspartate 83, aspartate 99, and aspartate 124. Lysine 164 acts as the Proton acceptor in catalysis.

This sequence belongs to the class I-like SAM-binding methyltransferase superfamily. RNA methyltransferase RlmE family.

The protein resides in the cytoplasm. It carries out the reaction uridine(2552) in 23S rRNA + S-adenosyl-L-methionine = 2'-O-methyluridine(2552) in 23S rRNA + S-adenosyl-L-homocysteine + H(+). In terms of biological role, specifically methylates the uridine in position 2552 of 23S rRNA at the 2'-O position of the ribose in the fully assembled 50S ribosomal subunit. The sequence is that of Ribosomal RNA large subunit methyltransferase E from Klebsiella pneumoniae (strain 342).